A 201-amino-acid polypeptide reads, in one-letter code: Proteasome subunit beta type-2 (201 aa).

Met1 carries the post-translational modification N-acetylmethionine.

Belongs to the peptidase T1B family. As to quaternary structure, the 26S proteasome consists of a 20S proteasome core and two 19S regulatory subunits. The 20S proteasome core is a barrel-shaped complex made of 28 subunits that are arranged in four stacked rings. The two outer rings are each formed by seven alpha subunits, and the two inner rings are formed by seven beta subunits. The proteolytic activity is exerted by three beta-subunits PSMB5, PSMB6 and PSMB7. (Microbial infection) Interacts with HIV-1 protein Tat.

The protein localises to the cytoplasm. It is found in the nucleus. Functionally, non-catalytic component of the 20S core proteasome complex involved in the proteolytic degradation of most intracellular proteins. This complex plays numerous essential roles within the cell by associating with different regulatory particles. Associated with two 19S regulatory particles, forms the 26S proteasome and thus participates in the ATP-dependent degradation of ubiquitinated proteins. The 26S proteasome plays a key role in the maintenance of protein homeostasis by removing misfolded or damaged proteins that could impair cellular functions, and by removing proteins whose functions are no longer required. Associated with the PA200 or PA28, the 20S proteasome mediates ubiquitin-independent protein degradation. This type of proteolysis is required in several pathways including spermatogenesis (20S-PA200 complex) or generation of a subset of MHC class I-presented antigenic peptides (20S-PA28 complex). The sequence is that of Proteasome subunit beta type-2 from Homo sapiens (Human).